Reading from the N-terminus, the 699-residue chain is Fervidolysin (699 aa).

Residues 1 to 21 (MRKVLLIASIVALILALFSCA) form the signal peptide. The propeptide occupies 22–149 (NPSFEPRSKA…MYKIRKPGLN (128 aa)). Glu-157 contributes to the Ca(2+) binding site. The Peptidase S8 domain maps to 163-465 (LWGLEAIGVT…YGLVKLDAAL (303 aa)). The Charge relay system role is filled by Asp-190. Asp-199 is a Ca(2+) binding site. His-228 (charge relay system) is an active-site residue. Ca(2+) is bound by residues Lys-239, Asp-241, Lys-243, and Ile-245. The Charge relay system role is filled by Ser-409.

This sequence belongs to the peptidase S8 family. Undergoes auto-proteolytic processing. Once cleaved, the propeptide can remain associated with the protease and blocks its activity. The physiological activation of fervidolysin is proposed to be achieved through the stepwise removal of the propeptide accomplished by several proteolytic cleavages that may not be autolytic.

Its subcellular location is the cell surface. Is inhibited by phenylmethylsulfonyl fluoride and 3,4-dichloroisocoumarin. EDTA and iodoacetate (1 to 5 mM) have only little effect on the enzyme activity. Functionally, protease able to degrade keratin into peptides. Is responsible for keratinolysis by F.pennivorans, which allows this bacterium to grow on native feathers. This chain is Fervidolysin, found in Fervidobacterium pennivorans.